The chain runs to 375 residues: Actin-related protein T1 (375 aa).

This sequence belongs to the actin family.

Its subcellular location is the cytoplasm. The protein localises to the cytoskeleton. It is found in the nucleus. It localises to the cytoplasmic vesicle. The protein resides in the secretory vesicle. Its subcellular location is the acrosome. Functionally, negatively regulates the Hedgehog (SHH) signaling. Binds to the promoter of the SHH signaling mediator, GLI1, and inhibits its expression. The polypeptide is Actin-related protein T1 (ACTRT1) (Macaca fascicularis (Crab-eating macaque)).